We begin with the raw amino-acid sequence, 226 residues long: MIESISKIIKYNFKNPQLLNEALTHPSLVSKDTLKFNYERLEFLGDAVLNIVISEMLFNIFPKDTEGNLAKKKTALVCGNKLVEVAQSINLGQFIMMSDGERACGGINNFRNLENALEALIGAIYLDGGFTAAQDFIYLFWEHSATHMNVPPQDAKTILQELVQGKRLPAPAYHTIDKSGPDHNPTFTVEVRIPSYQAIQATGHNKKLAEQKAASLMLNQIHNKTK.

An RNase III domain is found at 2-129; it reads IESISKIIKY…LIGAIYLDGG (128 aa). E42 provides a ligand contact to Mg(2+). Residue D46 is part of the active site. Residues N115 and E118 each coordinate Mg(2+). Residue E118 is part of the active site. In terms of domain architecture, DRBM spans 154-223; sequence DAKTILQELV…ASLMLNQIHN (70 aa).

This sequence belongs to the ribonuclease III family. Homodimer. Mg(2+) is required as a cofactor.

Its subcellular location is the cytoplasm. The catalysed reaction is Endonucleolytic cleavage to 5'-phosphomonoester.. In terms of biological role, digests double-stranded RNA. Involved in the processing of primary rRNA transcript to yield the immediate precursors to the large and small rRNAs (23S and 16S). Processes some mRNAs, and tRNAs when they are encoded in the rRNA operon. Processes pre-crRNA and tracrRNA of type II CRISPR loci if present in the organism. In Ehrlichia chaffeensis (strain ATCC CRL-10679 / Arkansas), this protein is Ribonuclease 3.